The following is a 251-amino-acid chain: Extracellular superoxide dismutase [Cu-Zn] (251 aa).

A signal peptide spans M1–G15. A propeptide spanning residues S16–E24 is cleaved from the precursor. 2 disulfides stabilise this stretch: C77–C222 and C139–C221. The N-linked (GlcNAc...) asparagine glycan is linked to N121. Residues H128, H130, and H145 each contribute to the Cu cation site. Residues H145, H153, H156, and D159 each contribute to the Zn(2+) site. H195 serves as a coordination point for Cu cation. The disordered stretch occupies residues A230 to T251.

The protein belongs to the Cu-Zn superoxide dismutase family. As to quaternary structure, homotetramer. Directly interacts with ATP7A/MNK; this interaction is copper-dependent and is required for SOD3 activity. Cu cation is required as a cofactor. Zn(2+) serves as cofactor.

Its subcellular location is the secreted. The protein localises to the extracellular space. It is found in the golgi apparatus. It localises to the trans-Golgi network. It catalyses the reaction 2 superoxide + 2 H(+) = H2O2 + O2. Its function is as follows. Protect the extracellular space from toxic effect of reactive oxygen intermediates by converting superoxide radicals into hydrogen peroxide and oxygen. The polypeptide is Extracellular superoxide dismutase [Cu-Zn] (Sod3) (Mus musculus (Mouse)).